The following is a 90-amino-acid chain: UPF0297 protein Swol_0469 (90 aa).

It belongs to the UPF0297 family.

This is UPF0297 protein Swol_0469 from Syntrophomonas wolfei subsp. wolfei (strain DSM 2245B / Goettingen).